Here is a 1085-residue protein sequence, read N- to C-terminus: Carbamoyl phosphate synthase large chain (1085 aa).

A carboxyphosphate synthetic domain region spans residues 1–399 (MPKRTDISNI…ALQKALCSLE (399 aa)). The ATP site is built by Arg127, Arg167, Gly174, Glu206, Leu208, Glu213, Gly239, Val240, His241, Gln283, and Glu297. In terms of domain architecture, ATP-grasp 1 spans 131–326 (KEAMLKIGMD…IAKVATMLAV (196 aa)). Mg(2+)-binding residues include Gln283, Glu297, and Asn299. Mn(2+) contacts are provided by Gln283, Glu297, and Asn299. The tract at residues 400-552 (NNWLGFESLS…APNPLPPIEN (153 aa)) is oligomerization domain. Positions 553–951 (KQEKKEKKIL…AFFKAQTACF (399 aa)) are carbamoyl phosphate synthetic domain. The region spanning 678–871 (SLFLKELDIK…LAKVATRVMV (194 aa)) is the ATP-grasp 2 domain. The ATP site is built by Arg714, Lys756, Leu758, Glu763, Gly788, Ile789, His790, Ser791, Gln830, and Glu842. Residues Gln830, Glu842, and Asn844 each contribute to the Mg(2+) site. Gln830, Glu842, and Asn844 together coordinate Mn(2+). Residues 952–1085 (NPIKNKGLIF…ELLALQDYLK (134 aa)) enclose the MGS-like domain. The tract at residues 952–1085 (NPIKNKGLIF…ELLALQDYLK (134 aa)) is allosteric domain.

This sequence belongs to the CarB family. Composed of two chains; the small (or glutamine) chain promotes the hydrolysis of glutamine to ammonia, which is used by the large (or ammonia) chain to synthesize carbamoyl phosphate. Tetramer of heterodimers (alpha,beta)4. The cofactor is Mg(2+). Mn(2+) serves as cofactor.

The enzyme catalyses hydrogencarbonate + L-glutamine + 2 ATP + H2O = carbamoyl phosphate + L-glutamate + 2 ADP + phosphate + 2 H(+). The catalysed reaction is hydrogencarbonate + NH4(+) + 2 ATP = carbamoyl phosphate + 2 ADP + phosphate + 2 H(+). It functions in the pathway amino-acid biosynthesis; L-arginine biosynthesis; carbamoyl phosphate from bicarbonate: step 1/1. Its pathway is pyrimidine metabolism; UMP biosynthesis via de novo pathway; (S)-dihydroorotate from bicarbonate: step 1/3. Its function is as follows. Large subunit of the glutamine-dependent carbamoyl phosphate synthetase (CPSase). CPSase catalyzes the formation of carbamoyl phosphate from the ammonia moiety of glutamine, carbonate, and phosphate donated by ATP, constituting the first step of 2 biosynthetic pathways, one leading to arginine and/or urea and the other to pyrimidine nucleotides. The large subunit (synthetase) binds the substrates ammonia (free or transferred from glutamine from the small subunit), hydrogencarbonate and ATP and carries out an ATP-coupled ligase reaction, activating hydrogencarbonate by forming carboxy phosphate which reacts with ammonia to form carbamoyl phosphate. This Helicobacter pylori (strain ATCC 700392 / 26695) (Campylobacter pylori) protein is Carbamoyl phosphate synthase large chain.